Consider the following 483-residue polypeptide: Betaine aldehyde dehydrogenase (483 aa).

Positions 27 and 93 each coordinate K(+). 149 to 151 (GAW) serves as a coordination point for NAD(+). Catalysis depends on Lys-161, which acts as the Charge relay system. NAD(+) is bound at residue 175–178 (KPSE). Residue Val-179 coordinates K(+). Residue 228–231 (SVPT) participates in NAD(+) binding. Val-243 provides a ligand contact to K(+). Catalysis depends on Glu-249, which acts as the Proton acceptor. NAD(+) is bound by residues Gly-251, Cys-283, and Glu-380. Cys-283 serves as the catalytic Nucleophile. Cysteine sulfenic acid (-SOH) is present on Cys-283. Positions 450 and 453 each coordinate K(+). Glu-457 functions as the Charge relay system in the catalytic mechanism.

Belongs to the aldehyde dehydrogenase family. Dimer of dimers. The cofactor is K(+).

It carries out the reaction betaine aldehyde + NAD(+) + H2O = glycine betaine + NADH + 2 H(+). The protein operates within amine and polyamine biosynthesis; betaine biosynthesis via choline pathway; betaine from betaine aldehyde: step 1/1. In terms of biological role, involved in the biosynthesis of the osmoprotectant glycine betaine. Catalyzes the irreversible oxidation of betaine aldehyde to the corresponding acid. In Cereibacter sphaeroides (strain ATCC 17025 / ATH 2.4.3) (Rhodobacter sphaeroides), this protein is Betaine aldehyde dehydrogenase.